A 277-amino-acid chain; its full sequence is F-actin-capping protein subunit beta isoforms 1 and 2 (277 aa).

The residue at position 2 (Ser-2) is an N-acetylserine.

The protein belongs to the F-actin-capping protein beta subunit family. Component of the F-actin capping complex, composed of a heterodimer of an alpha and a beta subunit. Component of the WASH complex. As to quaternary structure, component of the F-actin capping complex, composed of a heterodimer of an alpha and a beta subunit. Subunit of dynactin, a multiprotein complex part of a tripartite complex with dynein and a adapter, such as BICDL1, BICD2 or HOOK3. The dynactin complex is built around ACTR1A/ACTB filament and consists of an actin-related filament composed of a shoulder domain, a pointed end and a barbed end. Its length is defined by its flexible shoulder domain. In terms of tissue distribution, isoform 1 is detected in pectoral muscle, cardiac muscle and gizzard. Isoform 2 is detected in brain and liver (at protein level). Isoform 2 is the predominant isoform of nonmuscle tissues and isoform 1 is the predominant isoform of muscle tissues.

The protein resides in the cytoplasm. The protein localises to the myofibril. It localises to the sarcomere. Its subcellular location is the z line. It is found in the i band. The protein resides in the cytoskeleton. In terms of biological role, F-actin-capping proteins bind in a Ca(2+)-independent manner to the fast growing ends of actin filaments (barbed end) thereby blocking the exchange of subunits at these ends. Unlike other capping proteins (such as gelsolin and severin), these proteins do not sever actin filaments. May play a role in the regulation of cell morphology and cytoskeletal organization. Its function is as follows. Forms, with CAPZB, the barbed end of the fast growing ends of actin filaments in the dynactin complex and stabilizes dynactin structure. The dynactin multiprotein complex activates the molecular motor dynein for ultra-processive transport along microtubules. In Gallus gallus (Chicken), this protein is F-actin-capping protein subunit beta isoforms 1 and 2 (CAPZB).